The chain runs to 614 residues: DNA ligase (614 aa).

Residues 29–33 and 73–74 contribute to the NAD(+) site; these read DQDYD and SI. Lys111 (N6-AMP-lysine intermediate) is an active-site residue. The NAD(+) site is built by Arg127, Glu158, and Lys270. The Zn(2+) site is built by Cys358, Cys361, Cys374, and Cys380. One can recognise a BRCT domain in the interval 538–614; sequence TLTHELFDKK…MTETDYLSKI (77 aa).

It belongs to the NAD-dependent DNA ligase family. LigA subfamily. Mg(2+) is required as a cofactor. Requires Mn(2+) as cofactor.

It catalyses the reaction NAD(+) + (deoxyribonucleotide)n-3'-hydroxyl + 5'-phospho-(deoxyribonucleotide)m = (deoxyribonucleotide)n+m + AMP + beta-nicotinamide D-nucleotide.. Its function is as follows. DNA ligase that catalyzes the formation of phosphodiester linkages between 5'-phosphoryl and 3'-hydroxyl groups in double-stranded DNA using NAD as a coenzyme and as the energy source for the reaction. It is essential for DNA replication and repair of damaged DNA. The polypeptide is DNA ligase (Ruthia magnifica subsp. Calyptogena magnifica).